Reading from the N-terminus, the 228-residue chain is 2,3-bisphosphoglycerate-dependent phosphoglycerate mutase (228 aa).

Substrate is bound by residues 8-15 (RHGQSQWN), 21-22 (TG), Arg60, 87-90 (ERHY), Lys98, 114-115 (RR), and 180-181 (GN). The active-site Tele-phosphohistidine intermediate is His9. Glu87 functions as the Proton donor/acceptor in the catalytic mechanism.

This sequence belongs to the phosphoglycerate mutase family. BPG-dependent PGAM subfamily. As to quaternary structure, homodimer.

It carries out the reaction (2R)-2-phosphoglycerate = (2R)-3-phosphoglycerate. It functions in the pathway carbohydrate degradation; glycolysis; pyruvate from D-glyceraldehyde 3-phosphate: step 3/5. Its function is as follows. Catalyzes the interconversion of 2-phosphoglycerate and 3-phosphoglycerate. The chain is 2,3-bisphosphoglycerate-dependent phosphoglycerate mutase from Erythrobacter litoralis (strain HTCC2594).